The chain runs to 167 residues: UPF0114 protein in repA1-repA2 intergenic region (167 aa).

Helical transmembrane passes span 15 to 35, 53 to 73, and 136 to 156; these read LMFP…LKFF, LVLI…LVMV, and IILC…MAYI.

The protein belongs to the UPF0114 family.

The protein localises to the cell membrane. This Buchnera aphidicola subsp. Pterocomma populeum protein is UPF0114 protein in repA1-repA2 intergenic region.